The chain runs to 605 residues: 9-cis-epoxycarotenoid dioxygenase NCED1, chloroplastic (605 aa).

A chloroplast-targeting transit peptide spans 1–16 (MATTTSHATNTWIKTK). The segment at 55–89 (ILHFPKQSSNYQTPKNNTISHPKQENNNSSSSSTS) is disordered. Positions 60–75 (KQSSNYQTPKNNTISH) are enriched in polar residues. Over residues 80-89 (NNNSSSSSTS) the composition is skewed to low complexity. His-302, His-351, His-416, and His-592 together coordinate Fe cation.

The protein belongs to the carotenoid oxygenase family. Fe(2+) serves as cofactor. In terms of tissue distribution, expressed in developing and ripening fruits. Highly expressed in pulp. Observed in unpollinated ovaries (e.g. ovules, placenta and pericarp). Expressed in flowers.

Its subcellular location is the plastid. It localises to the chloroplast stroma. It carries out the reaction a 9-cis-epoxycarotenoid + O2 = a 12'-apo-carotenal + 2-cis,4-trans-xanthoxin. It catalyses the reaction 9-cis-violaxanthin + O2 = (3S,5R,6S)-5,6-epoxy-3-hydroxy-5,6-dihydro-12'-apo-beta-caroten-12'-al + 2-cis,4-trans-xanthoxin. The enzyme catalyses 9'-cis-neoxanthin + O2 = (3S,5R,6R)-3,5-dihydroxy-6,7-didehydro-5,6-dihydro-12'-apo-beta-caroten-12'-al + 2-cis,4-trans-xanthoxin. It participates in plant hormone biosynthesis; abscisate biosynthesis. Functionally, has a 11,12(11',12') 9-cis epoxycarotenoid cleavage activity. Catalyzes the first step of abscisic-acid (ABA) biosynthesis from carotenoids. Required for ABA accumulation upon drought. Required for ABA-mediated regulation of anther/pollen development, including metabolism, cell wall modification and transcription level. Positive regulator of fruit ripening involved in the biosynthesis of abscisic acid (ABA); initiates ABA biosynthesis at the onset of fruit ripening. Modulates the degree of pigmentation and carotenoid composition as well as pectin catabolism during ripening and may regulate the ethylene production and action in climacteric tomato fruit. This chain is 9-cis-epoxycarotenoid dioxygenase NCED1, chloroplastic, found in Solanum lycopersicum (Tomato).